The sequence spans 247 residues: 5'-nucleotidase SurE (247 aa).

A divalent metal cation-binding residues include aspartate 8, aspartate 9, serine 39, and asparagine 91.

This sequence belongs to the SurE nucleotidase family. Requires a divalent metal cation as cofactor.

The protein localises to the cytoplasm. The enzyme catalyses a ribonucleoside 5'-phosphate + H2O = a ribonucleoside + phosphate. In terms of biological role, nucleotidase that shows phosphatase activity on nucleoside 5'-monophosphates. The protein is 5'-nucleotidase SurE of Laribacter hongkongensis (strain HLHK9).